Reading from the N-terminus, the 212-residue chain is Peptide methionine sulfoxide reductase MsrA (212 aa).

The active site involves Cys52.

Belongs to the MsrA Met sulfoxide reductase family.

The catalysed reaction is L-methionyl-[protein] + [thioredoxin]-disulfide + H2O = L-methionyl-(S)-S-oxide-[protein] + [thioredoxin]-dithiol. The enzyme catalyses [thioredoxin]-disulfide + L-methionine + H2O = L-methionine (S)-S-oxide + [thioredoxin]-dithiol. Its function is as follows. Has an important function as a repair enzyme for proteins that have been inactivated by oxidation. Catalyzes the reversible oxidation-reduction of methionine sulfoxide in proteins to methionine. The protein is Peptide methionine sulfoxide reductase MsrA of Yersinia pseudotuberculosis serotype O:1b (strain IP 31758).